Reading from the N-terminus, the 380-residue chain is Glucose ABC transporter permease protein TsgB13 (380 aa).

10 helical membrane passes run 20–40 (GTPV…LVAL), 59–81 (QFGL…AVYL), 94–114 (GQLL…SLPA), 115–135 (VALL…WAGI), 148–166 (IITS…SYLL), 202–222 (IPLF…VVAT), 255–275 (VYLF…IAEI), 282–301 (FRAA…ALLG), 305–325 (AVKV…GSSV), and 328–348 (AFGV…LFLI).

It belongs to the binding-protein-dependent transport system permease family. In terms of assembly, the complex is composed of two ATP-binding proteins (TsgD13), two transmembrane proteins (TsgB13 and TsgC13) and a solute-binding protein (TsgA13).

Its subcellular location is the cell membrane. Part of an ABC transporter complex involved in glucose import. Responsible for the translocation of the substrate across the membrane. In Haloferax volcanii (strain ATCC 29605 / DSM 3757 / JCM 8879 / NBRC 14742 / NCIMB 2012 / VKM B-1768 / DS2) (Halobacterium volcanii), this protein is Glucose ABC transporter permease protein TsgB13 (tsgB13).